The sequence spans 250 residues: uncharacterized protein (250 aa).

This is an uncharacterized protein from Bacillus subtilis (strain 168).